The following is a 443-amino-acid chain: Omega-6 fatty acid desaturase, chloroplastic (443 aa).

The N-terminal 64 residues, 1 to 64, are a transit peptide targeting the chloroplast; the sequence is MASRIADSLF…AKKRIGCIKA (64 aa). Positions 166 to 170 match the Histidine box-1 motif; that stretch reads HDCAH. A Histidine box-2 motif is present at residues 202-206; sequence HDRHH. Residues 362–366 carry the Histidine box-3 motif; that stretch reads HIPHH.

It belongs to the fatty acid desaturase type 1 family.

The protein resides in the plastid. The protein localises to the chloroplast membrane. It carries out the reaction a (9Z)-octadecenoyl-containing glycerolipid + 2 reduced [2Fe-2S]-[ferredoxin] + O2 + 2 H(+) = a (9Z,12Z)-octadecadienoyl-containing glycerolipid + 2 oxidized [2Fe-2S]-[ferredoxin] + 2 H2O. Its pathway is lipid metabolism; polyunsaturated fatty acid biosynthesis. Chloroplast omega-6 fatty acid desaturase introduces the second double bond in the biosynthesis of 16:3 and 18:3 fatty acids, important constituents of plant membranes. It is thought to use ferredoxin as an electron donor and to act on fatty acids esterified to galactolipids, sulfolipids and phosphatidylglycerol. This chain is Omega-6 fatty acid desaturase, chloroplastic, found in Brassica napus (Rape).